We begin with the raw amino-acid sequence, 87 residues long: U3-theraphotoxin-Hhn1a 12 (87 aa).

The signal sequence occupies residues 1–24; that stretch reads MVNMKASMFLTFAGLVLLFVVCYA. Positions 25 to 52 are excised as a propeptide; that stretch reads SESEEKEFPKEMLSSIFAVDKDFKQEER. Cystine bridges form between Cys54/Cys67, Cys61/Cys72, and Cys66/Cys79.

The protein belongs to the neurotoxin 10 (Hwtx-1) family. 51 (Hntx-8) subfamily. Hntx-8 sub-subfamily. In terms of tissue distribution, expressed by the venom gland.

It is found in the secreted. Ion channel inhibitor. The protein is U3-theraphotoxin-Hhn1a 12 of Cyriopagopus hainanus (Chinese bird spider).